The primary structure comprises 275 residues: 3-methyl-2-oxobutanoate hydroxymethyltransferase (275 aa).

Positions 55 and 94 each coordinate Mg(2+). 3-methyl-2-oxobutanoate-binding positions include 55–56 (DS), Asp-94, and Lys-122. A Mg(2+)-binding site is contributed by Glu-124. Glu-191 (proton acceptor) is an active-site residue.

This sequence belongs to the PanB family. Homodecamer; pentamer of dimers. Requires Mg(2+) as cofactor.

The protein localises to the cytoplasm. The enzyme catalyses 3-methyl-2-oxobutanoate + (6R)-5,10-methylene-5,6,7,8-tetrahydrofolate + H2O = 2-dehydropantoate + (6S)-5,6,7,8-tetrahydrofolate. The protein operates within cofactor biosynthesis; (R)-pantothenate biosynthesis; (R)-pantoate from 3-methyl-2-oxobutanoate: step 1/2. Functionally, catalyzes the reversible reaction in which hydroxymethyl group from 5,10-methylenetetrahydrofolate is transferred onto alpha-ketoisovalerate to form ketopantoate. This is 3-methyl-2-oxobutanoate hydroxymethyltransferase from Marinomonas sp. (strain MWYL1).